The following is a 201-amino-acid chain: Alpha-1-acid glycoprotein (201 aa).

The first 18 residues, 1–18 (MALPWALAVLSLLPLLHA), serve as a signal peptide directing secretion. Asn-25, Asn-33, Asn-87, Asn-93, Asn-103, and Asn-169 each carry an N-linked (GlcNAc...) asparagine glycan. A disulfide bridge connects residues Cys-90 and Cys-183.

This sequence belongs to the calycin superfamily. Lipocalin family.

Its subcellular location is the secreted. Functionally, functions as a transport protein in the blood stream. Binds various ligands in the interior of its beta-barrel domain. Appears to function in modulating the activity of the immune system during the acute-phase reaction. The chain is Alpha-1-acid glycoprotein (ORM1) from Oryctolagus cuniculus (Rabbit).